The following is a 192-amino-acid chain: MLRRGVKIGVLTNNENKFIELKEIAKNFNIELEHLRGEKIEIQSDDLEEISRTAANLAYLIFRRPLIVDDSGLFVQALQNFPGPYTNFVKNTIGLKGILKLLEGIKDRSAYFMTALTFTDGKIIKTFIGIVKGAISEEIRGNLGFGFDPIFIPEGEKRTFAEMSLEEKNRYSHRARAFAKFAEFLESYTEKE.

Position 12 to 17 (12 to 17) interacts with substrate; that stretch reads TNNENK. Mg(2+) contacts are provided by E41 and D70. D70 functions as the Proton acceptor in the catalytic mechanism. Residues S71, 145–148, K168, and 173–174 contribute to the substrate site; these read FGFD and HR.

This sequence belongs to the HAM1 NTPase family. As to quaternary structure, homodimer. It depends on Mg(2+) as a cofactor.

The enzyme catalyses XTP + H2O = XMP + diphosphate + H(+). It carries out the reaction dITP + H2O = dIMP + diphosphate + H(+). The catalysed reaction is ITP + H2O = IMP + diphosphate + H(+). Functionally, pyrophosphatase that catalyzes the hydrolysis of nucleoside triphosphates to their monophosphate derivatives, with a high preference for the non-canonical purine nucleotides XTP (xanthosine triphosphate), dITP (deoxyinosine triphosphate) and ITP. Seems to function as a house-cleaning enzyme that removes non-canonical purine nucleotides from the nucleotide pool, thus preventing their incorporation into DNA/RNA and avoiding chromosomal lesions. This Saccharolobus solfataricus (strain ATCC 35092 / DSM 1617 / JCM 11322 / P2) (Sulfolobus solfataricus) protein is dITP/XTP pyrophosphatase.